The primary structure comprises 354 residues: Homer protein homolog 2 (354 aa).

A WH1 domain is found at methionine 1–alanine 110. Positions serine 92–lysine 120 form a coiled coil. The segment at arginine 114–lysine 163 is disordered. Positions threonine 123–glycine 146 are enriched in polar residues. A coiled-coil region spans residues threonine 160–phenylalanine 329.

Belongs to the Homer family. As to quaternary structure, isoform 1 and isoform 2 encode coiled-coil structures that mediate homo- and heteromultimerization. Interacts with NFATC2; interaction is reduced by AKT activation. Interacts with NFATC1 and NFATC4. Interacts with DAGLA (via PPXXF motif); this interaction is required for the cell membrane localization of DAGLA. In terms of tissue distribution, constitutively expressed in the adult hippocampus.

It localises to the cytoplasm. It is found in the cell membrane. Its subcellular location is the postsynaptic density. The protein localises to the synapse. The protein resides in the cell projection. It localises to the stereocilium. Postsynaptic density scaffolding protein. Binds and cross-links cytoplasmic regions of GRM1, GRM5, ITPR1, DNM3, RYR1, RYR2, SHANK1 and SHANK3. By physically linking GRM1 and GRM5 with ER-associated ITPR1 receptors, it aids the coupling of surface receptors to intracellular calcium release. May also couple GRM1 to PI3 kinase through its interaction with AGAP2. Isoforms can be differently regulated and may play an important role in maintaining the plasticity at glutamatergic synapses. Required for normal hearing. Negatively regulates T cell activation by inhibiting the calcineurin-NFAT pathway. Acts by competing with calcineurin/PPP3CA for NFAT protein binding, hence preventing NFAT activation by PPP3CA. In Rattus norvegicus (Rat), this protein is Homer protein homolog 2.